A 159-amino-acid polypeptide reads, in one-letter code: MGLFNISLLLTCLMVLAIFHSCEAQNSPQDYLAVHNDARAQVGVGPMSWDANLASRAQNYANSRAGDCNLIHSGAGENLAKGGGDFTGRAAVQLWVSERPSYNYATNQCVGGKKCRHYTQVVWRNSVRLGCGRARCNNGWWFISCNYDPVGNWIGQRPY.

An N-terminal signal peptide occupies residues 1–24 (MGLFNISLLLTCLMVLAIFHSCEA). Residue Gln25 is modified to Pyrrolidone carboxylic acid. The SCP domain maps to 32–147 (LAVHNDARAQ…NGWWFISCNY (116 aa)). 3 disulfide bridges follow: Cys68/Cys136, Cys109/Cys115, and Cys131/Cys145.

This sequence belongs to the CRISP family.

In terms of biological role, probably involved in the defense reaction of plants against pathogens. Has antifungal activity. The sequence is that of Pathogenesis-related leaf protein 6 (PR1B1) from Solanum lycopersicum (Tomato).